The primary structure comprises 256 residues: Trypsinogen-like protein 3 (256 aa).

The first 14 residues, 1 to 14 (MILLLVLALGLAGA), serve as a signal peptide directing secretion. The Peptidase S1 domain maps to 15-237 (SPLGEYKECP…YNDWIHQVMA (223 aa)). Disulfide bonds link Cys-23/Cys-153, Cys-41/Cys-57, Cys-125/Cys-226, Cys-132/Cys-199, Cys-164/Cys-180, and Cys-189/Cys-213.

Belongs to the peptidase S1 family.

The polypeptide is Trypsinogen-like protein 3 (trp3) (Pseudopleuronectes americanus (Winter flounder)).